A 278-amino-acid chain; its full sequence is Thiazole synthase (278 aa).

The active-site Schiff-base intermediate with DXP is the K107. Residues G168, 194-195 (AG), and 216-217 (AS) contribute to the 1-deoxy-D-xylulose 5-phosphate site.

It belongs to the ThiG family. Homotetramer. Forms heterodimers with either ThiH or ThiS.

It is found in the cytoplasm. The catalysed reaction is [ThiS sulfur-carrier protein]-C-terminal-Gly-aminoethanethioate + 2-iminoacetate + 1-deoxy-D-xylulose 5-phosphate = [ThiS sulfur-carrier protein]-C-terminal Gly-Gly + 2-[(2R,5Z)-2-carboxy-4-methylthiazol-5(2H)-ylidene]ethyl phosphate + 2 H2O + H(+). It participates in cofactor biosynthesis; thiamine diphosphate biosynthesis. Catalyzes the rearrangement of 1-deoxy-D-xylulose 5-phosphate (DXP) to produce the thiazole phosphate moiety of thiamine. Sulfur is provided by the thiocarboxylate moiety of the carrier protein ThiS. In vitro, sulfur can be provided by H(2)S. This Corynebacterium jeikeium (strain K411) protein is Thiazole synthase.